We begin with the raw amino-acid sequence, 24 residues long: Brevinin-1BYc (24 aa).

Residues cysteine 18 and cysteine 24 are joined by a disulfide bond.

As to expression, expressed by the skin glands.

The protein resides in the secreted. Its function is as follows. Antibacterial activity against Gram-positive bacterium S.aureus. Weak antifungal activity against C.albicans. The protein is Brevinin-1BYc of Rana boylii (Foothill yellow-legged frog).